A 424-amino-acid polypeptide reads, in one-letter code: Dihydroorotase (424 aa).

The Zn(2+) site is built by histidine 61 and histidine 63. Substrate contacts are provided by residues 63-65 (HLR) and asparagine 95. Zn(2+) is bound by residues aspartate 153, histidine 180, and histidine 233. Asparagine 279 lines the substrate pocket. Aspartate 306 is a binding site for Zn(2+). Residue aspartate 306 is part of the active site. Histidine 310 is a substrate binding site.

It belongs to the metallo-dependent hydrolases superfamily. DHOase family. Class I DHOase subfamily. The cofactor is Zn(2+).

The catalysed reaction is (S)-dihydroorotate + H2O = N-carbamoyl-L-aspartate + H(+). The protein operates within pyrimidine metabolism; UMP biosynthesis via de novo pathway; (S)-dihydroorotate from bicarbonate: step 3/3. Functionally, catalyzes the reversible cyclization of carbamoyl aspartate to dihydroorotate. The sequence is that of Dihydroorotase from Citrifermentans bemidjiense (strain ATCC BAA-1014 / DSM 16622 / JCM 12645 / Bem) (Geobacter bemidjiensis).